The chain runs to 90 residues: Small ribosomal subunit protein uS17 (90 aa).

Belongs to the universal ribosomal protein uS17 family. As to quaternary structure, part of the 30S ribosomal subunit.

In terms of biological role, one of the primary rRNA binding proteins, it binds specifically to the 5'-end of 16S ribosomal RNA. The chain is Small ribosomal subunit protein uS17 from Acidiphilium cryptum (strain JF-5).